The sequence spans 181 residues: MKQLLDFIPLIIFFALYKFYDIYVATGALIAATTLQVIVTYAMYKKVEKMQLITFVMVALFGGMTLALHDDNFIKWKVTIVYVVFALGLTISQIMGKPAIKGMLGKELTLPDAVWSTINWAWVMFFSGCAALNLYVAYHLPLDVWVNFKVFGLLAATFVFTLLTGGYIYKHLPHEPKQKNQ.

A run of 5 helical transmembrane segments spans residues Leu-10–Ile-30, Met-50–Asp-70, Ile-80–Ile-100, Trp-120–Leu-140, and Phe-148–Ile-168.

This sequence belongs to the YciB family.

It is found in the cell inner membrane. Its function is as follows. Plays a role in cell envelope biogenesis, maintenance of cell envelope integrity and membrane homeostasis. The chain is Inner membrane-spanning protein YciB from Vibrio cholerae serotype O1 (strain ATCC 39541 / Classical Ogawa 395 / O395).